Here is a 120-residue protein sequence, read N- to C-terminus: Large ribosomal subunit protein bL20 (120 aa).

Belongs to the bacterial ribosomal protein bL20 family.

Functionally, binds directly to 23S ribosomal RNA and is necessary for the in vitro assembly process of the 50S ribosomal subunit. It is not involved in the protein synthesizing functions of that subunit. The polypeptide is Large ribosomal subunit protein bL20 (Karelsulcia muelleri (strain GWSS) (Sulcia muelleri)).